We begin with the raw amino-acid sequence, 582 residues long: DBIRD complex subunit ZNF326 (582 aa).

Residues Met1–Gly124 form a mediates transcriptional activation region. Residues Ser48, Ser56, Ser63, Ser69, Ser81, Ser82, Ser91, Ser106, Ser114, Ser118, Ser121, and Ser137 each carry the phosphoserine modification. Residue Lys140 forms a Glycyl lysine isopeptide (Lys-Gly) (interchain with G-Cter in SUMO2) linkage. The interval Tyr154–Gly194 is disordered. Position 173 is an omega-N-methylarginine (Arg173). Ser212 is modified (phosphoserine). Arg235 is subject to Omega-N-methylarginine. A Bipartite nuclear localization signal motif is present at residues Lys238 to Lys260. Lys240 is covalently cross-linked (Glycyl lysine isopeptide (Lys-Gly) (interchain with G-Cter in SUMO2)). The disordered stretch occupies residues Gln243 to Glu302. At Lys247 the chain carries N6-acetyllysine; alternate. Lys247 is covalently cross-linked (Glycyl lysine isopeptide (Lys-Gly) (interchain with G-Cter in SUMO2); alternate). Phosphoserine is present on Ser249. Thr251 bears the Phosphothreonine mark. Glycyl lysine isopeptide (Lys-Gly) (interchain with G-Cter in SUMO2) cross-links involve residues Lys254 and Lys264. Position 270 is a phosphoserine (Ser270). The segment covering Thr272–Arg290 has biased composition (basic and acidic residues). The C2H2 AKAP95-type 1 zinc finger occupies Cys314–His336. Residue Lys401 forms a Glycyl lysine isopeptide (Lys-Gly) (interchain with G-Cter in SUMO2) linkage. Residues Cys407 to His430 form a C2H2 AKAP95-type 2 zinc finger. Glycyl lysine isopeptide (Lys-Gly) (interchain with G-Cter in SUMO2) cross-links involve residues Lys459 and Lys467. Residues Phe472–Asn582 form a disordered region. The span at Ile483–Glu523 shows a compositional bias: acidic residues. Positions Glu530–Gly545 are enriched in gly residues. The span at Gly552–Ala567 shows a compositional bias: acidic residues.

The protein belongs to the AKAP95 family. As to quaternary structure, component of the DBIRD complex. Interacts with CCAR2; the interaction is direct.

The protein resides in the nucleus matrix. Its function is as follows. Core component of the DBIRD complex, a multiprotein complex that acts at the interface between core mRNP particles and RNA polymerase II (RNAPII) and integrates transcript elongation with the regulation of alternative splicing: the DBIRD complex affects local transcript elongation rates and alternative splicing of a large set of exons embedded in (A + T)-rich DNA regions. May play a role in neuronal differentiation and is able to bind DNA and activate expression in vitro. The sequence is that of DBIRD complex subunit ZNF326 (ZNF326) from Homo sapiens (Human).